The sequence spans 373 residues: UDP-N-acetylglucosamine--N-acetylmuramyl-(pentapeptide) pyrophosphoryl-undecaprenol N-acetylglucosamine transferase (373 aa).

Residues 13–15 (TGG), asparagine 124, arginine 164, serine 192, and glutamine 293 each bind UDP-N-acetyl-alpha-D-glucosamine.

The protein belongs to the glycosyltransferase 28 family. MurG subfamily.

Its subcellular location is the cell inner membrane. The enzyme catalyses di-trans,octa-cis-undecaprenyl diphospho-N-acetyl-alpha-D-muramoyl-L-alanyl-D-glutamyl-meso-2,6-diaminopimeloyl-D-alanyl-D-alanine + UDP-N-acetyl-alpha-D-glucosamine = di-trans,octa-cis-undecaprenyl diphospho-[N-acetyl-alpha-D-glucosaminyl-(1-&gt;4)]-N-acetyl-alpha-D-muramoyl-L-alanyl-D-glutamyl-meso-2,6-diaminopimeloyl-D-alanyl-D-alanine + UDP + H(+). The protein operates within cell wall biogenesis; peptidoglycan biosynthesis. Cell wall formation. Catalyzes the transfer of a GlcNAc subunit on undecaprenyl-pyrophosphoryl-MurNAc-pentapeptide (lipid intermediate I) to form undecaprenyl-pyrophosphoryl-MurNAc-(pentapeptide)GlcNAc (lipid intermediate II). In Allorhizobium ampelinum (strain ATCC BAA-846 / DSM 112012 / S4) (Agrobacterium vitis (strain S4)), this protein is UDP-N-acetylglucosamine--N-acetylmuramyl-(pentapeptide) pyrophosphoryl-undecaprenol N-acetylglucosamine transferase.